The sequence spans 575 residues: Melatonin-related receptor (575 aa).

The Extracellular segment spans residues methionine 1 to phenylalanine 30. The helical transmembrane segment at methionine 31 to leucine 51 threads the bilayer. The Cytoplasmic segment spans residues alanine 52–asparagine 64. Residues valine 65–methionine 85 traverse the membrane as a helical segment. The Extracellular segment spans residues leucine 86 to methionine 103. Cysteine 101 and cysteine 178 are oxidised to a cystine. Residues valine 104–isoleucine 124 traverse the membrane as a helical segment. Topologically, residues asparagine 125–arginine 143 are cytoplasmic. The helical transmembrane segment at asparagine 144–methionine 164 threads the bilayer. The Extracellular segment spans residues tyrosine 165–phenylalanine 188. The helical transmembrane segment at alanine 189–valine 209 threads the bilayer. Topologically, residues lysine 210 to methionine 239 are cytoplasmic. A helical transmembrane segment spans residues phenylalanine 240 to valine 260. At alanine 261–asparagine 273 the chain is on the extracellular side. A helical membrane pass occupies residues tryptophan 274 to tyrosine 294. The Cytoplasmic portion of the chain corresponds to glycine 295–valine 575. Disordered regions lie at residues valine 368–proline 421 and serine 446–threonine 474. The segment covering proline 455 to threonine 474 has biased composition (polar residues).

The protein belongs to the G-protein coupled receptor 1 family. In terms of assembly, homodimer, and heterodimer with MTNR1A and MTNR1B. Interacts with KAT5. Interacts with RTN4 isoform A/NOGO-A. Interacts with TGFBR1.

The protein resides in the cell membrane. G protein-coupled receptor that plays a role in numerous physiological processes including regulation of energy metabolism, neurite outgrowth or cell migration. Promotes self-renewal and neuronal differentiation of neural progenitor cells through activation of the NOTCH and WNT/beta-catenin signaling pathways. Modulates the KAT5-dependent glucocorticoid receptor signaling by modulating KAT5 subcellular compartmentalisation. Also plays a role in the activation TGFBR1 in the absence of TGFBR2 by interfering with FKBP1A binding to TGFBR1, leading to induction of both canonical and non-canonical SMAD signaling pathways resulting in inhibition of proliferation or promotion of migration. The protein is Melatonin-related receptor (GPR50) of Ovis aries (Sheep).